The sequence spans 137 residues: Large ribosomal subunit protein uL16 (137 aa).

Belongs to the universal ribosomal protein uL16 family. Part of the 50S ribosomal subunit.

In terms of biological role, binds 23S rRNA and is also seen to make contacts with the A and possibly P site tRNAs. The polypeptide is Large ribosomal subunit protein uL16 (Anaplasma phagocytophilum (strain HZ)).